We begin with the raw amino-acid sequence, 669 residues long: Glycerol uptake/efflux facilitator protein (669 aa).

Over residues 1–16 (MSNPQKALNDFLSSES) the composition is skewed to polar residues. Disordered stretches follow at residues 1–99 (MSNP…TYVP) and 123–147 (QDIN…RGQT). Over 1 to 254 (MSNPQKALND…WSSVKNTYLK (254 aa)) the chain is Extracellular. Residues 50-68 (NNNNNNNNNNNNSNNNNNG) show a composition bias toward low complexity. Positions 72 to 81 (GNDDDYDYEM) are enriched in acidic residues. 2 stretches are compositionally biased toward polar residues: residues 87–99 (SPQS…TYVP) and 133–147 (PSAS…RGQT). The residue at position 150 (serine 150) is a Phosphoserine. The interval 167–215 (HTIPESHLSRRRSRSRATSNAGHSANTGATNGRTTGAQTNMESNESPRN) is disordered. At threonine 168 the chain carries Phosphothreonine. The segment covering 191-206 (ANTGATNGRTTGAQTN) has biased composition (low complexity). Phosphoserine occurs at positions 209 and 212. A helical membrane pass occupies residues 255-275 (EFLAEFMGTMVMIIFGSAVVC). Over 276-325 (QVNVAGKIQQDNFNVALDNLNVTGSSAETIDAMKSLTSLVSSVAGGTFDD) the chain is Cytoplasmic. The chain crosses the membrane as a helical span at residues 326-346 (VALGWAAAVVMGYFCAGGSAI). Topologically, residues 347-369 (SGAHLNPSITLANLVYRGFPLKK) are extracellular. The short motif at 352–354 (NPS) is the NPA 1 element. A helical membrane pass occupies residues 370-390 (VPYYFAGQLIGAFTGALILFI). Residues 391-446 (WYKRVLQEAYSDWWMNESVAGMFCVFPKPYLSSGRQFFSEFLCGAMLQAGTFALTD) are Cytoplasmic-facing. The helical transmembrane segment at 447–467 (PYTCLSSDVFPLMMFILIFII) threads the bilayer. At 468 to 506 (NASMAYQTGTAMNLARDLGPRLALYAVGFDHKMLWVHHH) the chain is on the extracellular side. An NPA 2 motif is present at residues 480–482 (NLA). The helical transmembrane segment at 507–527 (HFFWVPMVGPFIGALMGGLVY) threads the bilayer. At 528-669 (DVCIYQGHES…SHYGNAKKVT (142 aa)) the chain is on the cytoplasmic side. Disordered stretches follow at residues 591 to 615 (LQKT…VQFK) and 635 to 669 (DSIE…KKVT). Residues 638 to 655 (ETASLGATTTDSIGLSDT) show a composition bias toward polar residues.

The protein belongs to the MIP/aquaporin (TC 1.A.8) family.

The protein localises to the membrane. Its function is as follows. Channel protein for glycerol. Has a role in both glycerol influx and efflux. Plays a role in osmoregulation: under osmotic stress the channel is apparently closed to allow accumulation of glycerol in the cell under hyperosmotic conditions. The protein is Glycerol uptake/efflux facilitator protein (FPS1) of Saccharomyces cerevisiae (strain ATCC 204508 / S288c) (Baker's yeast).